The primary structure comprises 130 residues: Small ribosomal subunit protein uS9 (130 aa).

Belongs to the universal ribosomal protein uS9 family.

The chain is Small ribosomal subunit protein uS9 from Pasteurella multocida (strain Pm70).